The primary structure comprises 354 residues: NAD-dependent epimerase/dehydratase ALT6 (354 aa).

NADP(+) is bound by residues K41 and Y174.

The protein belongs to the NAD(P)-dependent epimerase/dehydratase family. Dihydroflavonol-4-reductase subfamily.

Its pathway is mycotoxin biosynthesis. Its function is as follows. NAD-dependent epimerase/dehydratase; part of the gene cluster that mediates the biosynthesis of the host-selective toxins (HSTs) AAL-toxins, sphinganine-analog mycotoxins responsible for Alternaria stem canker on tomato by the tomato pathotype. The biosynthesis starts with the polyketide synthase ALT1-catalyzed C-16 carbon chain assembly from one starter acetyl-CoA unit with malonyl-CoA extender units. ALT1 also selectively transfers methyl groups at the first and the third cycle of chain elongation for AAL toxin. The C-16 polyketide chain is released from the enzyme by a nucleophilic attack of a carbanion, which is derived from R-carbon of glycin by decarboxylation, on the carbonyl carbon of polyketide acyl chain. This step is probably catalyzed by a pyridoxal 5'-phosphate-dependent aminoacyl transferase ALT4. The respective functions of the other enzymes encoded by the cluster have still to be elucidated. The sphingosine N-acyltransferase-like protein ALT7 seems not to act as a resistance/self-tolerance factor against the toxin in the toxin biosynthetic gene cluster, contrary to what is expected. In Alternaria alternata (Alternaria rot fungus), this protein is NAD-dependent epimerase/dehydratase ALT6.